Consider the following 314-residue polypeptide: Ferrochelatase (314 aa).

Positions 184 and 259 each coordinate Fe cation.

The protein belongs to the ferrochelatase family.

It is found in the cytoplasm. The catalysed reaction is heme b + 2 H(+) = protoporphyrin IX + Fe(2+). Its pathway is porphyrin-containing compound metabolism; protoheme biosynthesis; protoheme from protoporphyrin-IX: step 1/1. Its function is as follows. Catalyzes the ferrous insertion into protoporphyrin IX. The chain is Ferrochelatase from Chlamydia trachomatis serovar L2 (strain ATCC VR-902B / DSM 19102 / 434/Bu).